The primary structure comprises 430 residues: Adenylosuccinate synthetase (430 aa).

Residues 12–18 (GDEGKGK) and 40–42 (GHT) each bind GTP. The active-site Proton acceptor is the D13. Mg(2+) contacts are provided by D13 and G40. IMP-binding positions include 13 to 16 (DEGK), 38 to 41 (NAGH), T128, R142, Q223, T238, and R302. H41 (proton donor) is an active-site residue. Residue 298–304 (TTTGRPR) coordinates substrate. Residues R304, 330–332 (SID), and 412–414 (SVG) each bind GTP.

The protein belongs to the adenylosuccinate synthetase family. In terms of assembly, homodimer. Mg(2+) is required as a cofactor.

It is found in the cytoplasm. It catalyses the reaction IMP + L-aspartate + GTP = N(6)-(1,2-dicarboxyethyl)-AMP + GDP + phosphate + 2 H(+). It functions in the pathway purine metabolism; AMP biosynthesis via de novo pathway; AMP from IMP: step 1/2. Plays an important role in the de novo pathway of purine nucleotide biosynthesis. Catalyzes the first committed step in the biosynthesis of AMP from IMP. This Streptococcus pyogenes serotype M2 (strain MGAS10270) protein is Adenylosuccinate synthetase.